Reading from the N-terminus, the 1100-residue chain is Lysylphosphatidylglycerol biosynthesis bifunctional protein LysX (1100 aa).

Residues 1-601 (MTPTSLARAR…LLHSDGTAPD (601 aa)) form a phosphatidylglycerol lysyltransferase region. Transmembrane regions (helical) follow at residues 18–38 (VPAAAGWIVGVIATLSLLASV), 60–80 (FPDTSFAWAFVLALLAAALAA), 84–104 (IAWWILVGYMIAAAGWNIAGL), 112–132 (FAEVGEVIGLAFHLAAIAFLL), 154–174 (LVASMAVGTLIGWGLLELFPG), 206–226 (VFVNALLGLFGAVALMVTAIV), and 314–332 (AYGWAPGVMGASAAGAQAF). The lysine--tRNA ligase stretch occupies residues 602-1100 (GMGLQADLAD…TLPFPLAKPR (499 aa)). A DNA-binding region (OB) is located at residues 661 to 739 (VAVAGRVLRS…SLLVSGWRLI (79 aa)). Residues D1012 and E1019 each contribute to the Mg(2+) site.

In the N-terminal section; belongs to the LPG synthetase family. This sequence in the C-terminal section; belongs to the class-II aminoacyl-tRNA synthetase family. Mg(2+) serves as cofactor.

The protein localises to the cell membrane. The enzyme catalyses tRNA(Lys) + L-lysine + ATP = L-lysyl-tRNA(Lys) + AMP + diphosphate. The catalysed reaction is L-lysyl-tRNA(Lys) + a 1,2-diacyl-sn-glycero-3-phospho-(1'-sn-glycerol) = a 1,2-diacyl-sn-glycero-3-phospho-1'-(3'-O-L-lysyl)-sn-glycerol + tRNA(Lys). Catalyzes the production of L-lysyl-tRNA(Lys)transfer and the transfer of a lysyl group from L-lysyl-tRNA(Lys) to membrane-bound phosphatidylglycerol (PG), which produces lysylphosphatidylglycerol (LPG), one of the components of the bacterial membrane with a positive net charge. LPG synthesis contributes to the resistance to cationic antimicrobial peptides (CAMPs) and likely protects M.tuberculosis against the CAMPs produced by competiting microorganisms (bacteriocins). In fact, the modification of anionic phosphatidylglycerol with positively charged L-lysine results in repulsion of the peptides. This Mycolicibacterium vanbaalenii (strain DSM 7251 / JCM 13017 / BCRC 16820 / KCTC 9966 / NRRL B-24157 / PYR-1) (Mycobacterium vanbaalenii) protein is Lysylphosphatidylglycerol biosynthesis bifunctional protein LysX (lysX).